The chain runs to 333 residues: Glyceraldehyde-3-phosphate dehydrogenase (333 aa).

The residue at position 1 (Ser1) is an N-acetylserine. NAD(+)-binding positions include Arg10–Ile11, Asp31, and Ser118. D-glyceraldehyde 3-phosphate is bound by residues Ser147–Thr149, Thr178, Thr207–Gly208, and Arg230. The active-site Nucleophile is Cys148. Asn312 contacts NAD(+).

The protein belongs to the glyceraldehyde-3-phosphate dehydrogenase family. As to quaternary structure, homotetramer.

It is found in the cytoplasm. The enzyme catalyses D-glyceraldehyde 3-phosphate + phosphate + NAD(+) = (2R)-3-phospho-glyceroyl phosphate + NADH + H(+). It functions in the pathway carbohydrate degradation; glycolysis; pyruvate from D-glyceraldehyde 3-phosphate: step 1/5. This is Glyceraldehyde-3-phosphate dehydrogenase from Homarus americanus (American lobster).